Here is a 104-residue protein sequence, read N- to C-terminus: BLOC-1-related complex subunit 7 (104 aa).

The protein belongs to the BORCS7 family.

It localises to the lysosome membrane. Its function is as follows. As part of a BORC-like complex may play a role in lysosomes movement and localization at the cell periphery. Associated with the cytosolic face of lysosomes, this complex may couple lysosomes to microtubule plus-end-directed kinesin motor. This is BLOC-1-related complex subunit 7 from Xenopus tropicalis (Western clawed frog).